The sequence spans 145 residues: D-aminoacyl-tRNA deacylase (145 aa).

Residues G137–P138 carry the Gly-cisPro motif, important for rejection of L-amino acids motif.

The protein belongs to the DTD family. As to quaternary structure, homodimer.

The protein localises to the cytoplasm. It catalyses the reaction glycyl-tRNA(Ala) + H2O = tRNA(Ala) + glycine + H(+). It carries out the reaction a D-aminoacyl-tRNA + H2O = a tRNA + a D-alpha-amino acid + H(+). Functionally, an aminoacyl-tRNA editing enzyme that deacylates mischarged D-aminoacyl-tRNAs. Also deacylates mischarged glycyl-tRNA(Ala), protecting cells against glycine mischarging by AlaRS. Acts via tRNA-based rather than protein-based catalysis; rejects L-amino acids rather than detecting D-amino acids in the active site. By recycling D-aminoacyl-tRNA to D-amino acids and free tRNA molecules, this enzyme counteracts the toxicity associated with the formation of D-aminoacyl-tRNA entities in vivo and helps enforce protein L-homochirality. This is D-aminoacyl-tRNA deacylase from Dinoroseobacter shibae (strain DSM 16493 / NCIMB 14021 / DFL 12).